A 639-amino-acid polypeptide reads, in one-letter code: Alpha-dioxygenase 1 (639 aa).

The active-site Proton acceptor is His163. Asp164 contributes to the Ca(2+) binding site. His168 contributes to the heme b binding site. Thr216, Trp218, Asp220, and Ser222 together coordinate Ca(2+). Residues His389, Arg486, and Arg490 each contribute to the heme b site.

Belongs to the peroxidase family. In terms of assembly, forms monomers in solution. It depends on heme b as a cofactor. Ca(2+) serves as cofactor. As to expression, expressed in roots (epiderm), mature flowers (e.g. anthers) and senescing leaves.

The protein resides in the lipid droplet. It catalyses the reaction a 1,2-saturated fatty acid + O2 = a (2R)-2-hydroperoxy fatty acid. The enzyme catalyses (9Z,12Z,15Z)-octadecatrienoate + O2 = (R)-2-hydroperoxy-(9Z,12Z,15Z)-octadecatrienoate. The catalysed reaction is hexadecanoate + O2 = (2R)-2-hydroperoxyhexadecanoate. It carries out the reaction (9Z,12Z)-octadecadienoate + O2 = (2R,9Z,12Z)-2-hydroperoxyoctadecadienoate. It catalyses the reaction (9Z)-octadecenoate + O2 = (2R,9Z)-2-hydroperoxyoctadecenoate. Its function is as follows. Alpha-dioxygenase that catalyzes the primary oxygenation step of a variety of 14-20 carbon fatty acids, containing up to three unsaturated bonds, into their corresponding 2R-hydroperoxides. Involved in the production of oxylipins that function in cell signaling, wound healing, and protection from infection. Mediates protection against oxidative stress and cell death, probably by generating some lipid-derived molecules. Promotes local and systemic plant defense in a salicylic acid (SA)-dependent manner, including the establishment of systemic acquired resistance (SAR) in response to incompatible interaction. Involved in a negative regulation of abscisic acid (ABA)-mediated signaling pathway. In Arabidopsis thaliana (Mouse-ear cress), this protein is Alpha-dioxygenase 1.